The sequence spans 778 residues: Probable glutamine--tRNA ligase (778 aa).

Positions 188–205 (LKPQTKANDKPKAAKPKA) are enriched in basic and acidic residues. Residues 188-219 (LKPQTKANDKPKAAKPKAEVTPAAQTAEAASD) form a disordered region. Residues 273 to 283 (PEPNGILHIGH) carry the 'HIGH' region motif. ATP is bound by residues 274–276 (EPN) and 280–286 (HIGHAKA). L-glutamine is bound by residues Asp306 and Tyr441. Residues Thr460, 489–490 (RL), and 497–499 (VSK) each bind ATP. Positions 496-500 (LVSKR) match the 'KMSKS' region motif.

It belongs to the class-I aminoacyl-tRNA synthetase family.

It catalyses the reaction tRNA(Gln) + L-glutamine + ATP = L-glutaminyl-tRNA(Gln) + AMP + diphosphate. The sequence is that of Probable glutamine--tRNA ligase from Drosophila melanogaster (Fruit fly).